A 384-amino-acid polypeptide reads, in one-letter code: Dual-specificity RNA methyltransferase RlmN (384 aa).

Glutamate 93 (proton acceptor) is an active-site residue. In terms of domain architecture, Radical SAM core spans 99-339 (EETRGTLCVS…TTIRKTRGDD (241 aa)). Cysteine 106 and cysteine 344 are disulfide-bonded. Positions 113, 117, and 120 each coordinate [4Fe-4S] cluster. Residues 170-171 (GE), serine 202, 224-226 (SLH), and asparagine 301 contribute to the S-adenosyl-L-methionine site. Cysteine 344 serves as the catalytic S-methylcysteine intermediate.

The protein belongs to the radical SAM superfamily. RlmN family. Requires [4Fe-4S] cluster as cofactor.

Its subcellular location is the cytoplasm. The enzyme catalyses adenosine(2503) in 23S rRNA + 2 reduced [2Fe-2S]-[ferredoxin] + 2 S-adenosyl-L-methionine = 2-methyladenosine(2503) in 23S rRNA + 5'-deoxyadenosine + L-methionine + 2 oxidized [2Fe-2S]-[ferredoxin] + S-adenosyl-L-homocysteine. It carries out the reaction adenosine(37) in tRNA + 2 reduced [2Fe-2S]-[ferredoxin] + 2 S-adenosyl-L-methionine = 2-methyladenosine(37) in tRNA + 5'-deoxyadenosine + L-methionine + 2 oxidized [2Fe-2S]-[ferredoxin] + S-adenosyl-L-homocysteine. Its function is as follows. Specifically methylates position 2 of adenine 2503 in 23S rRNA and position 2 of adenine 37 in tRNAs. m2A2503 modification seems to play a crucial role in the proofreading step occurring at the peptidyl transferase center and thus would serve to optimize ribosomal fidelity. The chain is Dual-specificity RNA methyltransferase RlmN from Cupriavidus pinatubonensis (strain JMP 134 / LMG 1197) (Cupriavidus necator (strain JMP 134)).